A 76-amino-acid polypeptide reads, in one-letter code: Large ribosomal subunit protein uL29 (76 aa).

Belongs to the universal ribosomal protein uL29 family.

This Corynebacterium glutamicum (strain R) protein is Large ribosomal subunit protein uL29.